A 1360-amino-acid chain; its full sequence is DNA-directed RNA polymerase subunit beta (1360 aa).

This sequence belongs to the RNA polymerase beta chain family. As to quaternary structure, the RNAP catalytic core consists of 2 alpha, 1 beta, 1 beta' and 1 omega subunit. When a sigma factor is associated with the core the holoenzyme is formed, which can initiate transcription.

The catalysed reaction is RNA(n) + a ribonucleoside 5'-triphosphate = RNA(n+1) + diphosphate. Its function is as follows. DNA-dependent RNA polymerase catalyzes the transcription of DNA into RNA using the four ribonucleoside triphosphates as substrates. This chain is DNA-directed RNA polymerase subunit beta, found in Desulfotalea psychrophila (strain LSv54 / DSM 12343).